A 196-amino-acid chain; its full sequence is Large ribosomal subunit protein uL6 (196 aa).

This sequence belongs to the universal ribosomal protein uL6 family. Part of the 50S ribosomal subunit.

In terms of biological role, this protein binds to the 23S rRNA, and is important in its secondary structure. It is located near the subunit interface in the base of the L7/L12 stalk, and near the tRNA binding site of the peptidyltransferase center. In Pyrobaculum aerophilum (strain ATCC 51768 / DSM 7523 / JCM 9630 / CIP 104966 / NBRC 100827 / IM2), this protein is Large ribosomal subunit protein uL6.